The following is an 843-amino-acid chain: Tetratricopeptide repeat protein 7B (843 aa).

The stretch at 97-131 is one TPR 1 repeat; the sequence is QESNLVMAKLTYVEGDYKEALNIYARVGLDDLPLT. Ser160 and Ser202 each carry phosphoserine. 6 TPR repeats span residues 219 to 252, 363 to 396, 397 to 430, 479 to 514, 516 to 548, and 549 to 582; these read ETGLQRAHVLYFKNGNLTRGVGRFRELLRAVETR, SVVYDLLTIALGRRGQYEMLSECLERAMKFAFEE, FHLWYQFALSLMAAGKSARAVKVLKECIRLKPDD, TYSLQATDASLRGMQEGLQRKALLAFQRAHSLSPTD, QAAFYLALQLAISRQIPEALGYVRQALQLQGDD, and ANSLHLLALLLSAQKHYHDALNIIDMALSEYPEN. A phosphoserine mark is found at Ser625, Ser629, Ser630, Ser673, Ser677, Ser678, and Ser681. 4 TPR repeats span residues 696-729, 730-763, 765-797, and 798-831; these read AQIWLHAAEVYIGIGKPAEATACTQEAANLFPMS, HNVLYMRGQVAELRGHFDEARRWYEEALSISPTH, KSMQRLALVLHQLGRYSLAEKILRDAVQVNSTA, and HEVWNGLGEVLQAQGNDAAATECFLTALELEASS.

Component of a phosphatidylinositol 4-kinase (PI4K) complex, composed of PI4KA, EFR3 (EFR3A or EFR3B), TTC7 (TTC7A or TTC7B) and HYCC (HYCC1 or HYCC2). Interacts with PI4KA, interaction is direct. Interacts with EFR3 (EFR3A or EFR3B), interaction is direct. Interacts with HYCC (HYCC1 or HYCC2), interaction is direct. Association with the PI4K complex is strongly reduced by TMEM150A.

It is found in the cytoplasm. The protein localises to the cytosol. Its subcellular location is the cell membrane. Component of a complex required to localize phosphatidylinositol 4-kinase (PI4K) to the plasma membrane. The complex acts as a regulator of phosphatidylinositol 4-phosphate (PtdIns(4)P) synthesis. In the complex, plays a central role in bridging PI4KA to EFR3B and HYCC1, via direct interactions. The protein is Tetratricopeptide repeat protein 7B of Mus musculus (Mouse).